The chain runs to 323 residues: Methenyltetrahydromethanopterin cyclohydrolase (323 aa).

This sequence belongs to the MCH family.

The protein localises to the cytoplasm. The enzyme catalyses 5,10-methenyl-5,6,7,8-tetrahydromethanopterin + H2O = N(5)-formyl-5,6,7,8-tetrahydromethanopterin + H(+). Its pathway is one-carbon metabolism; methanogenesis from CO(2); 5,10-methenyl-5,6,7,8-tetrahydromethanopterin from CO(2): step 3/3. Its function is as follows. Catalyzes the reversible interconversion of 5-formyl-H(4)MPT to methenyl-H(4)MPT(+). This is Methenyltetrahydromethanopterin cyclohydrolase from Methanococcus maripaludis (strain C7 / ATCC BAA-1331).